The following is a 432-amino-acid chain: Adenylosuccinate synthetase (432 aa).

GTP-binding positions include 13-19 (GDEGKGK) and 41-43 (GHT). Asp-14 functions as the Proton acceptor in the catalytic mechanism. Asp-14 and Gly-41 together coordinate Mg(2+). IMP-binding positions include 14 to 17 (DEGK), 39 to 42 (NAGH), Thr-130, Arg-144, Gln-225, Thr-240, and Arg-304. His-42 functions as the Proton donor in the catalytic mechanism. A substrate-binding site is contributed by 300–306 (ATTGRRR). Residues Arg-306, 332 to 334 (KLD), and 414 to 416 (STG) contribute to the GTP site.

Belongs to the adenylosuccinate synthetase family. As to quaternary structure, homodimer. Mg(2+) is required as a cofactor.

The protein resides in the cytoplasm. The catalysed reaction is IMP + L-aspartate + GTP = N(6)-(1,2-dicarboxyethyl)-AMP + GDP + phosphate + 2 H(+). The protein operates within purine metabolism; AMP biosynthesis via de novo pathway; AMP from IMP: step 1/2. Functionally, plays an important role in the de novo pathway of purine nucleotide biosynthesis. Catalyzes the first committed step in the biosynthesis of AMP from IMP. The polypeptide is Adenylosuccinate synthetase (Methylococcus capsulatus (strain ATCC 33009 / NCIMB 11132 / Bath)).